The sequence spans 581 residues: Trehalase (581 aa).

This sequence belongs to the glycosyl hydrolase 15 family. As to quaternary structure, monomer.

It catalyses the reaction alpha,alpha-trehalose + H2O = alpha-D-glucose + beta-D-glucose. Its pathway is glycan degradation; trehalose degradation; D-glucose from alpha,alpha-trehalose: step 1/1. Inhibited by validamycin A. In terms of biological role, catalyzes the hydrolysis of alpha,alpha-trehalose into two molecules of D-glucose. This is Trehalase from Thermoplasma acidophilum (strain ATCC 25905 / DSM 1728 / JCM 9062 / NBRC 15155 / AMRC-C165).